The primary structure comprises 261 residues: NAD-capped RNA hydrolase NudC (261 aa).

R69 provides a ligand contact to substrate. Zn(2+) is bound by residues C98 and C101. E111 lines the substrate pocket. Zn(2+) is bound by residues C116 and C119. Y124 is a substrate binding site. In terms of domain architecture, Nudix hydrolase spans 125–248 (PQIAPCIIVA…TVARRLIEDT (124 aa)). A divalent metal cation contacts are provided by A158, E174, and E178. The Nudix box signature appears at 159-180 (GFVEVGETLEQTVAREVMEESS). Residue 192 to 199 (QPWPFPQS) coordinates substrate. Residue E219 participates in a divalent metal cation binding. A241 contacts substrate.

It belongs to the Nudix hydrolase family. NudC subfamily. As to quaternary structure, homodimer. Mg(2+) serves as cofactor. Mn(2+) is required as a cofactor. Requires Zn(2+) as cofactor.

It catalyses the reaction a 5'-end NAD(+)-phospho-ribonucleoside in mRNA + H2O = a 5'-end phospho-adenosine-phospho-ribonucleoside in mRNA + beta-nicotinamide D-ribonucleotide + 2 H(+). It carries out the reaction NAD(+) + H2O = beta-nicotinamide D-ribonucleotide + AMP + 2 H(+). The catalysed reaction is NADH + H2O = reduced beta-nicotinamide D-ribonucleotide + AMP + 2 H(+). Functionally, mRNA decapping enzyme that specifically removes the nicotinamide adenine dinucleotide (NAD) cap from a subset of mRNAs by hydrolyzing the diphosphate linkage to produce nicotinamide mononucleotide (NMN) and 5' monophosphate mRNA. The NAD-cap is present at the 5'-end of some mRNAs and stabilizes RNA against 5'-processing. Has preference for mRNAs with a 5'-end purine. Catalyzes the hydrolysis of a broad range of dinucleotide pyrophosphates. This chain is NAD-capped RNA hydrolase NudC, found in Erwinia tasmaniensis (strain DSM 17950 / CFBP 7177 / CIP 109463 / NCPPB 4357 / Et1/99).